The sequence spans 273 residues: MGKLLRKPLNERIAPGVTLVQDINQGNSPLSYVGFRLIELEKGAVYQEALTDLECCIVALTGKITVSEGDDIFAEIGTRANVFEKIPTDSVFISGGRAFQVKADTEKARVALCYSPANRDLPTTLIKASDNSIEQRGKYQNKRLVHNILPDVSGVASSLLVVEVYTNGGNFSSYPPHKHDRDNLPAESLLEESYYHEINPEQGFIFQRVYTDDRALDETMAVEHQNAVIVPEGYHPVGVPDGYDSYYLNVMAGPKRVWKFHNDPDHEWILERD.

Belongs to the isomerase IolB family.

It catalyses the reaction 5-deoxy-D-glucuronate = 5-dehydro-2-deoxy-D-gluconate. The protein operates within polyol metabolism; myo-inositol degradation into acetyl-CoA; acetyl-CoA from myo-inositol: step 4/7. In terms of biological role, involved in the isomerization of 5-deoxy-glucuronate (5DG) to 5-dehydro-2-deoxy-D-gluconate (DKG or 2-deoxy-5-keto-D-gluconate). The protein is 5-deoxy-glucuronate isomerase of Listeria innocua serovar 6a (strain ATCC BAA-680 / CLIP 11262).